The following is a 369-amino-acid chain: Putative glutamate--cysteine ligase 2-1 (369 aa).

This sequence belongs to the glutamate--cysteine ligase type 2 family. YbdK subfamily.

It catalyses the reaction L-cysteine + L-glutamate + ATP = gamma-L-glutamyl-L-cysteine + ADP + phosphate + H(+). ATP-dependent carboxylate-amine ligase which exhibits weak glutamate--cysteine ligase activity. In Rhodococcus jostii (strain RHA1), this protein is Putative glutamate--cysteine ligase 2-1.